The primary structure comprises 488 residues: Tripartite motif-containing protein 6 (488 aa).

The RING-type zinc finger occupies 15-60 (CPICLELLTEPLSIDCGHSFCQVCIIGNSNNSVFGQGGRSSCPVCR). The B box-type zinc finger occupies 92–133 (LEVIFCALHGEKLQLFCKEDGKLICWLCERSQEHRGHHTFLM). Positions 97, 100, 119, and 125 each coordinate Zn(2+). Residues 132-223 (LMEEVAQEYQ…SIIEKAEGDL (92 aa)) are a coiled coil. The B30.2/SPRY domain occupies 282–488 (DLRKMLKVFR…VPMTLRRPTS (207 aa)).

Belongs to the TRIM/RBCC family. In terms of assembly, homotrimer. Forms heteromultimers (via B30.2/SPRY domain) with TRIM5. Interacts with MYC. Interacts (via SPRY domain) with IKBKE. Interacts with VAMP8; this interaction contributes to the activation of the type I interferon antiviral response. Interacts with DHX16.

Its subcellular location is the cytoplasm. It catalyses the reaction S-ubiquitinyl-[E2 ubiquitin-conjugating enzyme]-L-cysteine + [acceptor protein]-L-lysine = [E2 ubiquitin-conjugating enzyme]-L-cysteine + N(6)-ubiquitinyl-[acceptor protein]-L-lysine.. The protein operates within protein modification; protein ubiquitination. Functionally, E3 ubiquitin ligase that plays a crucial role in the activation of the IKBKE-dependent branch of the type I interferon signaling pathway. In concert with the ubiquitin-conjugating E2 enzyme UBE2K, synthesizes unanchored 'Lys-48'-linked polyubiquitin chains that promote the oligomerization and autophosphorylation of IKBKE leading to stimulation of an antiviral response. Also ubiquitinates MYC and inhibits its transcription activation activity, maintaining the pluripotency of embryonic stem cells. Promotes the association of unanchored 'Lys-48'-polyubiquitin chains with DHX16 leading to enhancement of RIGI-mediated innate antiviral immune response. The chain is Tripartite motif-containing protein 6 (Trim6) from Mus musculus (Mouse).